The chain runs to 637 residues: Neuroendocrine convertase 2 (637 aa).

The signal sequence occupies residues 1-24; it reads MEGGCGSQWKAAGLLFCVMVFASA. A propeptide spanning residues 25-108 is cleaved from the precursor; sequence ERPVFTNHFL…QQEGFDRKKR (84 aa). Positions 128 to 452 constitute a Peptidase S8 domain; it reads QWYLFNTGQA…YGVLDAGAMV (325 aa). Catalysis depends on charge relay system residues aspartate 166 and histidine 207. 2 disulfides stabilise this stretch: cysteine 224–cysteine 375 and cysteine 316–cysteine 346. N-linked (GlcNAc...) asparagine glycosylation is present at asparagine 374. The active-site Charge relay system is the serine 383. The P/Homo B domain maps to 460-596; the sequence is TVPERFHCVG…TLMLHGTQSA (137 aa). An intrachain disulfide couples cysteine 467 to cysteine 493. N-linked (GlcNAc...) asparagine glycans are attached at residues asparagine 513 and asparagine 523.

It belongs to the peptidase S8 family. Furin subfamily.

It localises to the cytoplasmic vesicle. The protein resides in the secretory vesicle. Its subcellular location is the secreted. It carries out the reaction Release of protein hormones and neuropeptides from their precursors, generally by hydrolysis of -Lys-Arg-|- bonds.. Serine endopeptidase which is involved in the processing of hormone and other protein precursors at sites comprised of pairs of basic amino acid residues. Responsible for the release of glucagon from proglucagon in pancreatic A cells. In Rattus norvegicus (Rat), this protein is Neuroendocrine convertase 2 (Pcsk2).